The chain runs to 36 residues: Glycine-rich protein GWK (36 aa).

A disordered region spans residues 1 to 36 (YKRGGGGWGGGGGWKGGGGGGGGWKGGGGGGKGGGG).

Possesses antifungal activity against a number of phytopathogenic fungi, including H.sativum and F.culmorum. This Cucumis melo (Muskmelon) protein is Glycine-rich protein GWK.